Reading from the N-terminus, the 205-residue chain is Probable thymidylate kinase (205 aa).

7-14 contributes to the ATP binding site; it reads GIDGAGKS.

The protein belongs to the thymidylate kinase family.

It carries out the reaction dTMP + ATP = dTDP + ADP. This chain is Probable thymidylate kinase, found in Thermococcus onnurineus (strain NA1).